A 134-amino-acid polypeptide reads, in one-letter code: MNRRLSRLRAVQALYQMDVIDTSMEKAIESVLDEGEEASSFMSDLVSGTVTHQEELDRLYADHLQGWTVDRIGNVDRAILRMALYELYYVDDIPKNVSFNEAIELAKAFGGEDAGRFINGVLSKTMEAYKPKDK.

Belongs to the NusB family.

Its function is as follows. Involved in transcription antitermination. Required for transcription of ribosomal RNA (rRNA) genes. Binds specifically to the boxA antiterminator sequence of the ribosomal RNA (rrn) operons. This is Transcription antitermination protein NusB from Halalkalibacterium halodurans (strain ATCC BAA-125 / DSM 18197 / FERM 7344 / JCM 9153 / C-125) (Bacillus halodurans).